The primary structure comprises 33 residues: Photosystem II reaction center protein Psb30 (33 aa).

The helical transmembrane segment at 5–25 threads the bilayer; the sequence is ILAQLTALAFIVVSGPLVIAL.

This sequence belongs to the Psb30/Ycf12 family. In terms of assembly, PSII is composed of 1 copy each of membrane proteins PsbA, PsbB, PsbC, PsbD, PsbE, PsbF, PsbH, PsbI, PsbJ, PsbK, PsbL, PsbM, PsbT, PsbX, PsbY, PsbZ, Psb30/Ycf12, peripheral proteins of the oxygen-evolving complex and a large number of cofactors. It forms dimeric complexes.

It is found in the plastid. The protein localises to the chloroplast thylakoid membrane. A core subunit of photosystem II (PSII), probably helps stabilize the reaction center. The chain is Photosystem II reaction center protein Psb30 from Chaetosphaeridium globosum (Charophycean green alga).